The sequence spans 215 residues: Cytochrome b6 (215 aa).

Residues Ile-32–Phe-52 traverse the membrane as a helical segment. Cys-35 is a binding site for heme c. His-86 and His-100 together coordinate heme b. A run of 3 helical transmembrane segments spans residues Ala-90–Phe-110, Leu-116–Tyr-136, and Leu-186–Ile-206. His-187 and His-202 together coordinate heme b.

This sequence belongs to the cytochrome b family. PetB subfamily. As to quaternary structure, the 4 large subunits of the cytochrome b6-f complex are cytochrome b6, subunit IV (17 kDa polypeptide, PetD), cytochrome f and the Rieske protein, while the 4 small subunits are PetG, PetL, PetM and PetN. The complex functions as a dimer. It depends on heme b as a cofactor. The cofactor is heme c.

Its subcellular location is the plastid. The protein localises to the chloroplast thylakoid membrane. Functionally, component of the cytochrome b6-f complex, which mediates electron transfer between photosystem II (PSII) and photosystem I (PSI), cyclic electron flow around PSI, and state transitions. The polypeptide is Cytochrome b6 (Klebsormidium bilatum (Filamentous green alga)).